Consider the following 523-residue polypeptide: UDP-glucuronosyltransferase 3A2 (523 aa).

The first 22 residues, M1 to A22, serve as a signal peptide directing secretion. Over A23–Q483 the chain is Extracellular. N52 carries N-linked (GlcNAc...) asparagine glycosylation. Residues Y484–G504 form a helical membrane-spanning segment. At K505–T523 the chain is on the cytoplasmic side.

Belongs to the UDP-glycosyltransferase family.

Its subcellular location is the membrane. It catalyses the reaction glucuronate acceptor + UDP-alpha-D-glucuronate = acceptor beta-D-glucuronoside + UDP + H(+). Functionally, UDP-glucuronosyltransferases catalyze phase II biotransformation reactions in which lipophilic substrates are conjugated with glucuronic acid to increase water solubility and enhance excretion. They are of major importance in the conjugation and subsequent elimination of potentially toxic xenobiotics and endogenous compounds. The protein is UDP-glucuronosyltransferase 3A2 (UGT3A2) of Homo sapiens (Human).